A 393-amino-acid chain; its full sequence is Staphopain B (393 aa).

Residues 1–36 (MNSSCKTRVFNIISIIMVSMLILSLGAFANNNKAKA) form the signal peptide. A propeptide spanning residues 37-219 (DSHSKQLEIN…KVEENEAIQE (183 aa)) is cleaved from the precursor. Active-site residues include cysteine 243, histidine 340, and asparagine 360.

The protein belongs to the peptidase C47 family. In terms of assembly, in the cytoplasm, prematurely activated/folded SspB forms a stable non-covalent complex with SspC. Proteolytically cleaved by staphylococcal serine protease (SspA).

It is found in the secreted. Its activity is regulated as follows. Prematurely activated/folded staphopain B is inhibited by staphostatin B (SspC), which is probably required to protect staphylococcal cytoplasmic proteins from degradation by SspB. Cysteine protease that plays an important role in the inhibition of host innate immune response. Degrades host elastin, fibrogen, fibronectin and kininogen. Blocks phagocytosis of opsonised S.aureus by neutrophils and monocytes by inducing their death in a proteolytic activity-dependent manner. Decreases surface expression of the 'don't eat me' signal CD31 on neutrophils. Cleaves host galectin-3/LGALS3, thereby inhibiting the neutrophil-activating ability of the lectin. The chain is Staphopain B (sspB) from Staphylococcus aureus (strain MRSA252).